Here is a 236-residue protein sequence, read N- to C-terminus: Small ribosomal subunit protein uS3 (236 aa).

The KH type-2 domain occupies 39–107 (VREFLKKKLA…PVHLNIEEVR (69 aa)). The disordered stretch occupies residues 215-236 (AAQPAEPEKKVRKSGAKNAATS).

It belongs to the universal ribosomal protein uS3 family. Part of the 30S ribosomal subunit. Forms a tight complex with proteins S10 and S14.

Functionally, binds the lower part of the 30S subunit head. Binds mRNA in the 70S ribosome, positioning it for translation. This is Small ribosomal subunit protein uS3 from Methylobacillus flagellatus (strain ATCC 51484 / DSM 6875 / VKM B-1610 / KT).